A 1423-amino-acid polypeptide reads, in one-letter code: Protein phosphatase Slingshot homolog 2 (1423 aa).

Disordered stretches follow at residues 1–37 (MALV…PRSI) and 51–70 (LPRG…NKHA). A compositionally biased stretch (low complexity) spans 9–18 (SPTPSTTSSP). S17, S25, and S36 each carry phosphoserine. The DEK-C domain occupies 248–303 (ERTERLIKTKLREIMMQKDLENITSKEIRTELEMQMVCNLREFKEFIDNEMIVILG). A Tyrosine-protein phosphatase domain is found at 307–448 (SPTQIFEHVF…LEEYQGILLA (142 aa)). Catalysis depends on C392, which acts as the Phosphocysteine intermediate. Phosphoserine occurs at positions 461, 487, 534, 631, and 633. 7 disordered regions span residues 698–725 (EMAA…DEDQ), 833–858 (HSST…MHSG), 878–950 (RQEQ…HCER), 967–991 (APQD…QRAV), 1021–1042 (SLGH…KQGL), 1074–1105 (PQVL…KGDC), and 1207–1226 (PEAC…DLSH). Residues 884–904 (HGTASAGPTLSNRKNSKNDSS) show a composition bias toward polar residues. Basic and acidic residues-rich tracts occupy residues 910–932 (PKWK…EPSK), 976–987 (SRSKKQEGDLKK), and 1033–1042 (PSKEGEKQGL). S1217 is modified (phosphoserine). Residue T1422 is modified to Phosphothreonine.

The protein belongs to the protein-tyrosine phosphatase family. As to quaternary structure, interacts with filamentous actin. Expressed in brain, heart, liver, skeletal muscle, testis and thymus. Also expressed at lower levels in kidney, small intestine and spleen. Within testicular seminiferous tubules expressed in germ cells and spermatocytes, where it has a cytoplasmic localization, and round spermatids, where it concentrates in the acrosomal region next to the nucleus.

Its subcellular location is the cytoplasm. It is found in the cytoskeleton. It localises to the cell junction. The protein localises to the focal adhesion. The protein resides in the cytoplasmic vesicle. Its subcellular location is the secretory vesicle. It is found in the acrosome. It carries out the reaction O-phospho-L-tyrosyl-[protein] + H2O = L-tyrosyl-[protein] + phosphate. The catalysed reaction is O-phospho-L-seryl-[protein] + H2O = L-seryl-[protein] + phosphate. It catalyses the reaction O-phospho-L-threonyl-[protein] + H2O = L-threonyl-[protein] + phosphate. In terms of biological role, protein phosphatase which regulates actin filament dynamics. Dephosphorylates and activates the actin binding/depolymerizing factor cofilin, which subsequently binds to actin filaments and stimulates their disassembly. Inhibitory phosphorylation of cofilin is mediated by LIMK1, which may also be dephosphorylated and inactivated by this protein. Required for spermatogenesis. Involved in acrosome biogenesis, probably by regulating cofilin-mediated actin cytoskeleton remodeling during proacrosomal vesicle fusion and/or Golgi to perinuclear vesicle trafficking. The chain is Protein phosphatase Slingshot homolog 2 (Ssh2) from Mus musculus (Mouse).